Here is a 163-residue protein sequence, read N- to C-terminus: 2-C-methyl-D-erythritol 2,4-cyclodiphosphate synthase (163 aa).

A divalent metal cation is bound by residues Asp12 and His14. 4-CDP-2-C-methyl-D-erythritol 2-phosphate contacts are provided by residues 12 to 14 (DVH) and 38 to 39 (HS). His46 is an a divalent metal cation binding site. Residues 60 to 62 (DIG), 65 to 69 (FPDTD), 136 to 139 (TTTE), Phe143, and Arg146 each bind 4-CDP-2-C-methyl-D-erythritol 2-phosphate.

The protein belongs to the IspF family. In terms of assembly, homotrimer. A divalent metal cation serves as cofactor.

It catalyses the reaction 4-CDP-2-C-methyl-D-erythritol 2-phosphate = 2-C-methyl-D-erythritol 2,4-cyclic diphosphate + CMP. It participates in isoprenoid biosynthesis; isopentenyl diphosphate biosynthesis via DXP pathway; isopentenyl diphosphate from 1-deoxy-D-xylulose 5-phosphate: step 4/6. Its function is as follows. Involved in the biosynthesis of isopentenyl diphosphate (IPP) and dimethylallyl diphosphate (DMAPP), two major building blocks of isoprenoid compounds. Catalyzes the conversion of 4-diphosphocytidyl-2-C-methyl-D-erythritol 2-phosphate (CDP-ME2P) to 2-C-methyl-D-erythritol 2,4-cyclodiphosphate (ME-CPP) with a corresponding release of cytidine 5-monophosphate (CMP). In Acinetobacter baylyi (strain ATCC 33305 / BD413 / ADP1), this protein is 2-C-methyl-D-erythritol 2,4-cyclodiphosphate synthase.